The sequence spans 103 residues: MYAVIKTGGKQYRVAAGEKIKVEQIAADVGQEVVIDQVLAVGNGAEIKVGTPLVSGASVKATVVAHGKHDKVHIFKMRRRKHYQKRQGHRQQFTELQIVAIAA.

The protein belongs to the bacterial ribosomal protein bL21 family. Part of the 50S ribosomal subunit. Contacts protein L20.

This protein binds to 23S rRNA in the presence of protein L20. This chain is Large ribosomal subunit protein bL21, found in Delftia acidovorans (strain DSM 14801 / SPH-1).